Here is a 332-residue protein sequence, read N- to C-terminus: L-lactate dehydrogenase A chain (332 aa).

Ala-2 carries the N-acetylalanine modification. Lys-5 carries the N6-acetyllysine; alternate modification. At Lys-5 the chain carries N6-succinyllysine; alternate. Lys-14 is modified (N6-acetyllysine). Thr-18 bears the Phosphothreonine mark. Residue 29–57 (GAVGMACAISILMKDLADELALVDVIEDK) coordinates NAD(+). At Lys-57 the chain carries N6-acetyllysine; alternate. Lys-57 participates in a covalent cross-link: Glycyl lysine isopeptide (Lys-Gly) (interchain with G-Cter in SUMO2); alternate. At Lys-81 the chain carries N6-acetyllysine. NAD(+) is bound at residue Arg-99. Arg-106 is a substrate binding site. Lys-118 is subject to N6-acetyllysine; alternate. Lys-118 bears the N6-succinyllysine; alternate mark. N6-acetyllysine is present on Lys-126. Residue Asn-138 coordinates NAD(+). Substrate-binding residues include Asn-138 and Arg-169. His-193 functions as the Proton acceptor in the catalytic mechanism. N6-acetyllysine occurs at positions 224 and 232. At Tyr-239 the chain carries Phosphotyrosine. Lys-243 is subject to N6-acetyllysine. Position 248 (Thr-248) interacts with substrate. Thr-309 is subject to Phosphothreonine. Lys-318 is subject to N6-acetyllysine; alternate. An N6-succinyllysine; alternate modification is found at Lys-318. Thr-322 is modified (phosphothreonine).

Belongs to the LDH/MDH superfamily. LDH family. In terms of assembly, homotetramer. Interacts with PTEN upstream reading frame protein MP31. Post-translationally, ISGylated.

The protein resides in the cytoplasm. The enzyme catalyses (S)-lactate + NAD(+) = pyruvate + NADH + H(+). The protein operates within fermentation; pyruvate fermentation to lactate; (S)-lactate from pyruvate: step 1/1. Functionally, interconverts simultaneously and stereospecifically pyruvate and lactate with concomitant interconversion of NADH and NAD(+). The chain is L-lactate dehydrogenase A chain (LDHA) from Macaca fascicularis (Crab-eating macaque).